The chain runs to 148 residues: Proline-rich protein 13 (148 aa).

The segment at 1 to 148 is disordered; that stretch reads MWNPNAGQPG…SSSSSSSDSD (148 aa). 2 stretches are compositionally biased toward pro residues: residues 27–67 and 75–93; these read AHPP…PQPG and GPYP…PVNP. Basic residues predominate over residues 109 to 135; sequence MQKKMKKAHKKMHKHQKHHKYHKHGKH. Residues 136–148 show a composition bias toward low complexity; the sequence is SSSSSSSSSSDSD.

It localises to the nucleus. Functionally, negatively regulates TSP1 expression at the level of transcription. This down-regulation was shown to reduce taxane-induced apoptosis. In Homo sapiens (Human), this protein is Proline-rich protein 13 (PRR13).